The following is a 71-amino-acid chain: Large ribosomal subunit protein bL31 (71 aa).

C16, C18, C38, and C41 together coordinate Zn(2+).

The protein belongs to the bacterial ribosomal protein bL31 family. Type A subfamily. In terms of assembly, part of the 50S ribosomal subunit. Zn(2+) is required as a cofactor.

In terms of biological role, binds the 23S rRNA. This is Large ribosomal subunit protein bL31 from Neisseria gonorrhoeae (strain ATCC 700825 / FA 1090).